Consider the following 469-residue polypeptide: RNA-editing ligase 1, mitochondrial (469 aa).

A mitochondrion-targeting transit peptide spans 1 to 44; that stretch reads MQLQRLGAPLLKRLVGGCIRQSTAPIMPCVVVSGSGGFLTPVRT. Residues 59 to 61, 86 to 92, N92, R111, E159, F209, and 307 to 309 contribute to the ATP site; these read IEI, EKVHGTN, and KLR. K87 acts as the N6-AMP-lysine intermediate in catalysis. The interval 450-469 is disordered; sequence AAAQSEAIPPLSPAAPTKGE.

This sequence belongs to the RNA ligase 2 family. As to quaternary structure, component of the RNA editing complex (editosome), a 1600 kDa complex composed of at least 20 proteins. Interacts with terminal uridylyltransferase MEAT1.

It is found in the mitochondrion. The enzyme catalyses ATP + (ribonucleotide)n-3'-hydroxyl + 5'-phospho-(ribonucleotide)m = (ribonucleotide)n+m + AMP + diphosphate.. Essential for RNA editing. RNA editing in kinetoplastid mitochondria inserts and deletes uridylates at multiple sites in pre-mRNAs as directed by guide RNAs. The polypeptide is RNA-editing ligase 1, mitochondrial (REL1) (Trypanosoma brucei brucei (strain 927/4 GUTat10.1)).